Consider the following 482-residue polypeptide: NAD(+) hydrolase ThsA (482 aa).

Residues 3-281 (EHEQKIMIDR…EEITKRFRCK (279 aa)) enclose the Deacetylase sirtuin-type domain. The NAD(+) site is built by aspartate 112 and histidine 150. The active-site Proton acceptor is histidine 150. The SLOG (STALD) domain stretch occupies residues 282-482 (NVFLSGSAHE…SKIHDVIKLI (201 aa)). Positions 287, 288, 324, 355, 373, 390, 407, and 411 each coordinate 3'cADPR.

Belongs to the soluble Thoeris ThsA family. Homotetramer in solution.

The enzyme catalyses NAD(+) + H2O = ADP-D-ribose + nicotinamide + H(+). In vivo probably activated by a cyclic ADP-D-ribose generated by ThsB (might be 3'cADPR). NAD(+) hydrolyzing component (NADase) of the Thoeris antiviral defense system, composed of ThsA and ThsB (maybe J591_1492). As purified, has NADase activity that is not activated by any tested cADPR isomers; binds 3'cADPR better than 2'cADPR. It was suggested the purified protein is already in a fully active state. Upon activation binds and hydrolyzes NAD(+), leading to cell death and inhibition of phage replication. The polypeptide is NAD(+) hydrolase ThsA (Acinetobacter baumannii (strain 532279)).